We begin with the raw amino-acid sequence, 175 residues long: Ribosome maturation factor RimM (175 aa).

In terms of domain architecture, PRC barrel spans 97–170 (NGQYYWTDVL…YLYVDWQMAW (74 aa)).

Belongs to the RimM family. In terms of assembly, binds ribosomal protein uS19.

Its subcellular location is the cytoplasm. Its function is as follows. An accessory protein needed during the final step in the assembly of 30S ribosomal subunit, possibly for assembly of the head region. Essential for efficient processing of 16S rRNA. May be needed both before and after RbfA during the maturation of 16S rRNA. It has affinity for free ribosomal 30S subunits but not for 70S ribosomes. The protein is Ribosome maturation factor RimM of Dichelobacter nodosus (strain VCS1703A).